Consider the following 170-residue polypeptide: UPF0260 protein RPC_1790 (170 aa).

It belongs to the UPF0260 family.

In Rhodopseudomonas palustris (strain BisB18), this protein is UPF0260 protein RPC_1790.